The sequence spans 303 residues: Putative S-adenosyl-L-methionine-dependent methyltransferase MAB_0213c (303 aa).

Residues aspartate 126 and 155–156 (DL) each bind S-adenosyl-L-methionine.

Belongs to the UPF0677 family.

Functionally, exhibits S-adenosyl-L-methionine-dependent methyltransferase activity. This chain is Putative S-adenosyl-L-methionine-dependent methyltransferase MAB_0213c, found in Mycobacteroides abscessus (strain ATCC 19977 / DSM 44196 / CCUG 20993 / CIP 104536 / JCM 13569 / NCTC 13031 / TMC 1543 / L948) (Mycobacterium abscessus).